The primary structure comprises 384 residues: PqqA peptide cyclase (384 aa).

Residues 5–220 (VGLPLWLLAE…TNEYREKLKA (216 aa)) form the Radical SAM core domain. 3 residues coordinate [4Fe-4S] cluster: Cys-19, Cys-23, and Cys-26.

This sequence belongs to the radical SAM superfamily. PqqE family. In terms of assembly, interacts with PqqD. The interaction is necessary for activity of PqqE. [4Fe-4S] cluster serves as cofactor.

It catalyses the reaction [PQQ precursor protein] + S-adenosyl-L-methionine = E-Y cross-linked-[PQQ precursor protein] + 5'-deoxyadenosine + L-methionine + H(+). The protein operates within cofactor biosynthesis; pyrroloquinoline quinone biosynthesis. In terms of biological role, catalyzes the cross-linking of a glutamate residue and a tyrosine residue in the PqqA protein as part of the biosynthesis of pyrroloquinoline quinone (PQQ). In Acinetobacter baumannii (strain ACICU), this protein is PqqA peptide cyclase.